The sequence spans 300 residues: N-carbamoylputrescine amidase (300 aa).

The region spanning V8–L266 is the CN hydrolase domain. Catalysis depends on E47, which acts as the Proton acceptor. K120 serves as the catalytic Proton donor. C157 serves as the catalytic Nucleophile.

The protein belongs to the carbon-nitrogen hydrolase superfamily. As to quaternary structure, homooctamer.

The catalysed reaction is N-carbamoylputrescine + H2O + 2 H(+) = putrescine + NH4(+) + CO2. The protein operates within amine and polyamine biosynthesis; putrescine biosynthesis via agmatine pathway; putrescine from N-carbamoylputrescine (amidase route): step 1/1. Its function is as follows. Involved in polyamine biosynthesis. The polypeptide is N-carbamoylputrescine amidase (CPA) (Solanum lycopersicum (Tomato)).